The chain runs to 420 residues: MGEEEENPNSIDILPELLEEVLLRLPTKSILKCRIVSKQWRSLLESSRFAERHMSLQNSRRRILAAYNCDCGGRRKLLPESRFEGDEEIVYLHCDASRPSMTCQGVICFPEQDWIIVLNPSTSQLRRFPSGLNHNCRFRIGLWKTFSPGNWVMGFGRDKVNGRYKVVRMSFAFWRVRQEEPVVECGVLDVDTGEWRKLSPPPYVVNVGSKSVCVNGSIYWLHIQTVYRILALDLHKEEFHKVPVPPTQITVDTQMVNLEDRLVLAITRVSPEWILEVWGMDTYKEKWSKTYSISLDHRVVSWRRQKRWFTPVAVSKQANLVFYDNKKRLFKYYPVKDEIRCLSLDICVLSPYVENLVPLPLKPSHPHPTPKNSDFEMRISRCRLFSTPGSWISKILKWNVMTLEILFTSLAIVGYICLPL.

The F-box domain occupies 7–53 (NPNSIDILPELLEEVLLRLPTKSILKCRIVSKQWRSLLESSRFAERH). 2 LRR repeats span residues 112–135 (QDWI…LNHN) and 226–251 (VYRI…QITV).

The chain is F-box/LRR-repeat protein At2g43260 from Arabidopsis thaliana (Mouse-ear cress).